The chain runs to 79 residues: Conotoxin ArMSGL-021 (79 aa).

An N-terminal signal peptide occupies residues 1–20 (MSRLGIMVLTLLLLVFIVTS). A propeptide spanning residues 21-44 (HQDAGEKQATHRGAINFRWRRSLI) is cleaved from the precursor. Disulfide bonds link cysteine 52–cysteine 64, cysteine 56–cysteine 73, and cysteine 63–cysteine 77. Leucine 78 is subject to Leucine amide.

The protein belongs to the conotoxin O3 superfamily. In terms of tissue distribution, expressed by the venom duct.

The protein resides in the secreted. The chain is Conotoxin ArMSGL-021 from Conus arenatus (Sand-dusted cone).